The chain runs to 237 residues: MSDSQPGSTSSTGGKSDSGYIPGDDTWTQWRNIFAILTGKMTDEGKEQFRIARDIRNEAADCKRCEDQRDYLLQYSPIIRFLSDNIRQLGGDLSSHNIYCRRCTSRKAGGFDPEYGILLCANEMKDQGHLEDTMAHEMVHAYDHLRFKVDWTDNLRHAACTEIRASSLSGECRWAREFFRRGQWKFTQQHQECVRRRAILSVRARPGCKDEAHAEKVVNEVWDSCFRDTRPFDEIYR.

A compositionally biased stretch (low complexity) spans 1–19; that stretch reads MSDSQPGSTSSTGGKSDSG. The segment at 1–23 is disordered; it reads MSDSQPGSTSSTGGKSDSGYIPG. Histidine 136 serves as a coordination point for a divalent metal cation. Glutamate 137 is a catalytic residue. Histidine 140 is an a divalent metal cation binding site.

Belongs to the peptidase M76 family.

The protein localises to the mitochondrion inner membrane. In terms of biological role, has a dual role in the assembly of mitochondrial ATPase. Acts as a protease that removes N-terminal residues of mitochondrial ATPase CF(0) subunit 6 at the intermembrane space side. Also involved in the correct assembly of the membrane-embedded ATPase CF(0) particle, probably mediating association of subunit 6 with the subunit 9 ring. The chain is Mitochondrial inner membrane protease atp23 (atp23) from Neosartorya fischeri (strain ATCC 1020 / DSM 3700 / CBS 544.65 / FGSC A1164 / JCM 1740 / NRRL 181 / WB 181) (Aspergillus fischerianus).